The chain runs to 622 residues: Dehydrogenase mpl7 (622 aa).

FAD is bound by residues 23–24 (TA), 44–45 (EA), and 102–105 (NFMS). His554 functions as the Proton acceptor in the catalytic mechanism. FAD contacts are provided by residues Ala582 and 593–594 (IM).

The protein belongs to the GMC oxidoreductase family. As to quaternary structure, homodimer. Requires FAD as cofactor.

Its pathway is mycotoxin biosynthesis. Functionally, dehydrogenase; part of the gene cluster that mediates the biosynthesis of the mycotoxin citrinin, a hepato-nephrotoxic compound to humans due to inhibition of respiration complex III. The pathway begins with the synthesis of a keto-aldehyde intermediate by the citrinin PKS (pksCT) from successive condensations of 4 malonyl-CoA units, presumably with a simple acetyl-CoA starter unit. Release of the keto-aldehyde intermediate is consistent with the presence of the C-terminal reductive release domain. Mp11 collaborates with pksCT by catalyzing the hydrolysis of ACP-bound acyl intermediates to free the ACP from stalled intermediates. Mpl2 then catalyzes the oxidation of the C-12 methyl of the ketone intermediate to an alcohol intermediate which is further oxidized by the oxidoreductase mpl7 to produce a bisaldehyde intermediate. The fourth catalytic step is catalyzed by the mpl4 aldehyde dehydrogenase. The final transformation is the reduction of C-3 by mpl6 to provide the chemically stable citrinin nucleus. In Monascus purpureus (Red mold), this protein is Dehydrogenase mpl7.